We begin with the raw amino-acid sequence, 723 residues long: Nucleolar protein 11 (723 aa).

It localises to the nucleus. It is found in the nucleolus. Functionally, ribosome biogenesis factor. May be required for both optimal rDNA transcription and pre-rRNA processing. The protein is Nucleolar protein 11 (NOL11) of Gallus gallus (Chicken).